The following is a 237-amino-acid chain: Ribonuclease PH (237 aa).

Phosphate is bound by residues R86 and 124 to 126; that span reads GTR.

The protein belongs to the RNase PH family. As to quaternary structure, homohexameric ring arranged as a trimer of dimers.

The enzyme catalyses tRNA(n+1) + phosphate = tRNA(n) + a ribonucleoside 5'-diphosphate. Its function is as follows. Phosphorolytic 3'-5' exoribonuclease that plays an important role in tRNA 3'-end maturation. Removes nucleotide residues following the 3'-CCA terminus of tRNAs; can also add nucleotides to the ends of RNA molecules by using nucleoside diphosphates as substrates, but this may not be physiologically important. Probably plays a role in initiation of 16S rRNA degradation (leading to ribosome degradation) during starvation. The sequence is that of Ribonuclease PH from Zymomonas mobilis subsp. mobilis (strain ATCC 31821 / ZM4 / CP4).